The following is a 279-amino-acid chain: uncharacterized protein (279 aa).

The HTH lysR-type domain maps to 14-71; that stretch reads ITPNQIKLLIALHKTKSQNEAAKLLNIKPSSFNIQLKRLENKLGVKLYYSSPNGTVLT. The H-T-H motif DNA-binding region spans 31–50; that stretch reads QNEAAKLLNIKPSSFNIQLK.

It belongs to the LysR transcriptional regulatory family.

This is an uncharacterized protein from Methanocaldococcus jannaschii (strain ATCC 43067 / DSM 2661 / JAL-1 / JCM 10045 / NBRC 100440) (Methanococcus jannaschii).